A 745-amino-acid polypeptide reads, in one-letter code: MKETDREAVATAVQRVAGMLQRPDQLDKVEQYRRREARKKASVEARLKAAIQSQLDGVRTGLSQLHNALNDVKDIQQSLADVSKDWRQSINTIESLKDVKDAVVQHSQLAAAVENLKNIFSVPEIVRETQDLIEQGALLQAHRKLMDLECSRDGLMYEQYRMDSGNTRDMTLIHGYFGSTQGLSDELAKQLWMVLQRSLVTVRRDPTLLVSVVRIIEREEKIDRRILDRKKQTGFVPPGRPKNWKEKMFTILERTVTTRIEGTQADTRESDKMWLVRHLEIIRKYVLDDLIVAKNLMVQCFPPHYEIFKNLLNMYHQALSTRMQDLASEDLEANEIVSLLTWVLNTYTSTEMMRNVELAPEVDVGTLEPLLSPHVVSELLDTYMSTLTSNIIAWLRKALETDKKDWVKETEPEADQDGYYQTTLPAIVFQMFEQNLQVAAQISEDLKTKVLVLCLQQMNSFLSRYKDEAQLYKEEHLRNRQHPHCYVQYMIAIINNCQTFKESIVSLKRKYLKNEVEEGVSPSQPSMDGILDAIAKEGCSGLLEEVFLDLEQHLNELMTKKWLLGSNAVDIICVTVEDYFNDFAKIKKPYKKRMTAEAHRRVVVEYLRAVMQKRISFRSPEERKEGAEKMVREAEQLRFLFRKLASGFGEDVDGYCDTIVAVAEVIKLTDPSLLYLEVSTLVSKYPDIRDDHIGALLAVRGDASRDMKQTIMETLEQGPAQASPSYVPLFKDIVVPSLNVAKLLK.

K28 carries the N6-acetyllysine modification.

It belongs to the SEC6 family. As to quaternary structure, the exocyst complex is composed of EXOC1, EXOC2, EXOC3, EXOC4, EXOC5, EXOC6, EXOC7 and EXOC8. Interacts with EXOC3L1. Interacts with BIRC6/bruce. Interacts with MYRIP. Interacts with SLC6A9. Expressed in epididymis (at protein level).

It localises to the cytoplasm. The protein localises to the perinuclear region. It is found in the cell projection. Its subcellular location is the growth cone. The protein resides in the midbody. It localises to the golgi apparatus. The protein localises to the neuron projection. Functionally, component of the exocyst complex involved in the docking of exocytic vesicles with fusion sites on the plasma membrane. The chain is Exocyst complex component 3 (EXOC3) from Homo sapiens (Human).